The following is a 369-amino-acid chain: Phosphoribosyl pyrophosphate synthase-associated protein 2 (369 aa).

An N-acetylmethionine modification is found at Met1. A Phosphothreonine modification is found at Thr5. Phosphoserine is present on residues Ser219, Ser227, and Ser233.

The protein belongs to the ribose-phosphate pyrophosphokinase family. As to quaternary structure, binds to PRPS1 and PRPS2.

Functionally, seems to play a negative regulatory role in 5-phosphoribose 1-diphosphate synthesis. This chain is Phosphoribosyl pyrophosphate synthase-associated protein 2 (PRPSAP2), found in Pongo abelii (Sumatran orangutan).